Consider the following 337-residue polypeptide: DNA-directed RNA polymerase subunit alpha (337 aa).

The interval Met1–Glu233 is alpha N-terminal domain (alpha-NTD). Positions Gly266–Phe337 are alpha C-terminal domain (alpha-CTD).

This sequence belongs to the RNA polymerase alpha chain family. In terms of assembly, in plastids the minimal PEP RNA polymerase catalytic core is composed of four subunits: alpha, beta, beta', and beta''. When a (nuclear-encoded) sigma factor is associated with the core the holoenzyme is formed, which can initiate transcription.

The protein resides in the plastid. It is found in the chloroplast. It carries out the reaction RNA(n) + a ribonucleoside 5'-triphosphate = RNA(n+1) + diphosphate. Its function is as follows. DNA-dependent RNA polymerase catalyzes the transcription of DNA into RNA using the four ribonucleoside triphosphates as substrates. The protein is DNA-directed RNA polymerase subunit alpha of Ceratophyllum demersum (Rigid hornwort).